A 132-amino-acid polypeptide reads, in one-letter code: NAD(P) transhydrogenase subunit alpha part 2 (132 aa).

3 helical membrane passes run 43 to 63, 72 to 92, and 103 to 123; these read PLVF…YVVW, PLMS…MIAI, and LLGS…FIVT.

Complex of an alpha and a beta chain; in Rickettsia, the alpha chain seems to be made of two subunits.

It is found in the cell inner membrane. The enzyme catalyses NAD(+) + NADPH + H(+)(in) = NADH + NADP(+) + H(+)(out). Functionally, the transhydrogenation between NADH and NADP is coupled to respiration and ATP hydrolysis and functions as a proton pump across the membrane. The sequence is that of NAD(P) transhydrogenase subunit alpha part 2 (pntAB) from Rickettsia prowazekii (strain Madrid E).